The chain runs to 62 residues: Short neurotoxin 1 (62 aa).

Over residues 1–16 (LECHNQQSIQTPTTTG) the composition is skewed to polar residues. The disordered stretch occupies residues 1–20 (LECHNQQSIQTPTTTGCSGG). Intrachain disulfides connect cysteine 3-cysteine 24, cysteine 17-cysteine 41, cysteine 43-cysteine 54, and cysteine 55-cysteine 60.

This sequence belongs to the three-finger toxin family. Short-chain subfamily. Type I alpha-neurotoxin sub-subfamily. In terms of tissue distribution, expressed by the venom gland.

It is found in the secreted. Its function is as follows. Binds to muscle nicotinic acetylcholine receptor (nAChR) and inhibit acetylcholine from binding to the receptor, thereby impairing neuromuscular transmission. The polypeptide is Short neurotoxin 1 (Naja kaouthia (Monocled cobra)).